Here is a 135-residue protein sequence, read N- to C-terminus: Large ribosomal subunit protein uL15 (135 aa).

A disordered region spans residues 21-66; the sequence is VGRGQGSGMGKTATRGGKGQTARTGYKAKRGFEGGQQPLQRRLPKI.

This sequence belongs to the universal ribosomal protein uL15 family. Part of the 50S ribosomal subunit.

Functionally, binds to the 23S rRNA. This is Large ribosomal subunit protein uL15 from Helicobacter pylori (strain HPAG1).